The following is a 347-amino-acid chain: Phenylalanine--tRNA ligase alpha subunit (347 aa).

Glu-261 lines the Mg(2+) pocket.

Belongs to the class-II aminoacyl-tRNA synthetase family. Phe-tRNA synthetase alpha subunit type 1 subfamily. As to quaternary structure, tetramer of two alpha and two beta subunits. It depends on Mg(2+) as a cofactor.

The protein resides in the cytoplasm. It carries out the reaction tRNA(Phe) + L-phenylalanine + ATP = L-phenylalanyl-tRNA(Phe) + AMP + diphosphate + H(+). The polypeptide is Phenylalanine--tRNA ligase alpha subunit (Streptococcus pyogenes serotype M18 (strain MGAS8232)).